The primary structure comprises 276 residues: Large ribosomal subunit protein uL2 (276 aa).

Residues 225–276 (MNPNDHPHGGGEGRNPIGRNPVTPWGKPALGAKTRKKKHPSNRFIVKRRGKK) form a disordered region. The segment covering 257-276 (KTRKKKHPSNRFIVKRRGKK) has biased composition (basic residues).

Belongs to the universal ribosomal protein uL2 family. In terms of assembly, part of the 50S ribosomal subunit. Forms a bridge to the 30S subunit in the 70S ribosome.

Its function is as follows. One of the primary rRNA binding proteins. Required for association of the 30S and 50S subunits to form the 70S ribosome, for tRNA binding and peptide bond formation. It has been suggested to have peptidyltransferase activity; this is somewhat controversial. Makes several contacts with the 16S rRNA in the 70S ribosome. The polypeptide is Large ribosomal subunit protein uL2 (Desulfitobacterium hafniense (strain Y51)).